A 456-amino-acid chain; its full sequence is Palmitoyltransferase PFA4 (456 aa).

The Cytoplasmic segment spans residues 1–9 (MAARNWSRV). A helical transmembrane segment spans residues 10-30 (WVGGTVILISFIAFSSQIFVI). The Lumenal segment spans residues 31–37 (WPWYGRE). The helical transmembrane segment at 38–58 (ISLDLLMLLVPLNLAAFMIFW) threads the bilayer. Over 59 to 138 (NYRLCVITSP…GNCVGFYNQG (80 aa)) the chain is Cytoplasmic. In terms of domain architecture, DHHC spans 95–145 (RYCKNCAHYKPPRAHHCRQCKTCWLKLDHHCPWIGNCVGFYNQGHFIRFLL). The active-site S-palmitoyl cysteine intermediate is C125. Residues 139-159 (HFIRFLLWVDIGTTFHLIIMV) form a helical membrane-spanning segment. At 160 to 176 (RRVLYIAEYYHEPTLAD) the chain is on the lumenal side. The helical transmembrane segment at 177-197 (VLFLVFNFATCVPVWLCVGMF) threads the bilayer. Topologically, residues 198–456 (SIYHVYLACG…DPEEESGYTH (259 aa)) are cytoplasmic. Positions 284 to 377 (PPQDPSRLPN…YDHYDEGPMY (94 aa)) are disordered. Over residues 285–298 (PQDPSRLPNPPPIP) the composition is skewed to pro residues. Positions 309–321 (NGFNPNLRPTNSL) are enriched in polar residues. The span at 337–352 (SHEQGRHYSSGDERDN) shows a compositional bias: basic and acidic residues.

Belongs to the DHHC palmitoyltransferase family. PFA4 subfamily.

The protein resides in the endoplasmic reticulum membrane. The catalysed reaction is L-cysteinyl-[protein] + hexadecanoyl-CoA = S-hexadecanoyl-L-cysteinyl-[protein] + CoA. Mediates the reversible addition of palmitate to target proteins, thereby regulating their membrane association and biological function. Responsible for the modification of a subset of proteins that are critical in cryptococcal pathogenesis, with substrates involved in cell wall synthesis, signal transduction, and membrane trafficking. Palmitoylates chitin synthase CHS3. The sequence is that of Palmitoyltransferase PFA4 from Cryptococcus neoformans var. grubii serotype A (strain H99 / ATCC 208821 / CBS 10515 / FGSC 9487) (Filobasidiella neoformans var. grubii).